We begin with the raw amino-acid sequence, 330 residues long: Cathepsin K (330 aa).

A signal peptide spans 1–16; that stretch reads MWGLKVVLLLPVMSSA. The propeptide at 17 to 115 is activation peptide; the sequence is LYPEEILDTQ…TLYIPDWEGR (99 aa). An N-linked (GlcNAc...) asparagine glycan is attached at Asn-104. Intrachain disulfides connect Cys-137-Cys-178, Cys-171-Cys-211, and Cys-270-Cys-319. The active site involves Cys-140. Residues His-277 and Asn-297 contribute to the active site.

The protein belongs to the peptidase C1 family. As to expression, expressed in the thyroid epithelial cells.

Its subcellular location is the lysosome. The protein resides in the secreted. The protein localises to the apical cell membrane. The enzyme catalyses Broad proteolytic activity. With small-molecule substrates and inhibitors, the major determinant of specificity is P2, which is preferably Leu, Met &gt; Phe, and not Arg.. In terms of biological role, thiol protease involved in osteoclastic bone resorption and may participate partially in the disorder of bone remodeling. Displays potent endoprotease activity against fibrinogen at acid pH. May play an important role in extracellular matrix degradation. Involved in the release of thyroid hormone thyroxine (T4) by limited proteolysis of TG/thyroglobulin in the thyroid follicle lumen. This Sus scrofa (Pig) protein is Cathepsin K (CTSK).